The following is a 304-amino-acid chain: Tegument protein VP22 (304 aa).

Disordered regions lie at residues 23–68 and 112–184; these read YSTV…PNDD and STSN…GTPK. Residues 43–58 are compositionally biased toward basic and acidic residues; the sequence is RENDLYDKQSVSKEND. The span at 123–142 shows a compositional bias: pro residues; the sequence is AQPPPRGAAAAPPPRVPTRP. The segment covering 143-154 has biased composition (low complexity); sequence PTRAAATSTTPR. The short motif at 160 to 163 is the Nuclear localization signal element; the sequence is PKQR. The Nuclear export signal motif lies at 233–245; it reads LDRFLKAAAIRIL. The segment at 262–304 is disordered; that stretch reads STPDGYAAAGPNGYDRRPRTASRRRSLKCKPPADDFFDDTNSG. Basic residues predominate over residues 280-289; the sequence is RTASRRRSLK.

The protein belongs to the alphaherpesvirinae VP22 tegument protein family. Interacts with gE (via C-terminus); this interaction is necessary for the recruitment of VP22 to the Golgi and its packaging into virions. Interacts with gM (via C-terminus). Interacts with VP16; this interaction allows the formation of a tripartite complex composed of VP16, VP22 and UL41/VHS. Interacts with the capsid-binding protein UL16. Interacts with host CGAS. Highly phosphorylated in the host cell. Packaging is selective for underphosphorylated forms.

The protein localises to the virion tegument. It is found in the host cytoplasm. Its subcellular location is the host nucleus. The protein resides in the host Golgi apparatus. In terms of biological role, tegument protein that plays different roles during the time course of infection. Participates in both the accumulation of viral mRNAs and viral protein translation at late time of infection. Modulates the RNase activity of the virion host shutoff protein UL41 probably to ensure necessary levels of key cellular mRNAs and proteins. Plays a role in microtubule reorganization that occurs after viral infection by stabilizing microtubule network. Plays a role in the inhibition of host innate immune system by targeting the CGAS enzymatic activity which is the principal cytosolic DNA sensor that detects invading viral DNA. Acts by mediating disruption of liquid-like droplets in which CGAS is activated, thereby preventing CGAS activity. The protein is Tegument protein VP22 of Equine herpesvirus 1 (strain Ab4p) (EHV-1).